A 91-amino-acid polypeptide reads, in one-letter code: Small ribosomal subunit protein bS16 (91 aa).

Belongs to the bacterial ribosomal protein bS16 family.

In Exiguobacterium sp. (strain ATCC BAA-1283 / AT1b), this protein is Small ribosomal subunit protein bS16.